Consider the following 230-residue polypeptide: Phosphoribosylformylglycinamidine synthase subunit PurQ (230 aa).

One can recognise a Glutamine amidotransferase type-1 domain in the interval 2–230 (KIAVTKFLGT…KGMIDYAKRI (229 aa)). Cysteine 85 functions as the Nucleophile in the catalytic mechanism. Residues histidine 202 and glutamate 204 contribute to the active site.

Part of the FGAM synthase complex composed of 1 PurL, 1 PurQ and 2 PurS subunits.

It localises to the cytoplasm. It carries out the reaction N(2)-formyl-N(1)-(5-phospho-beta-D-ribosyl)glycinamide + L-glutamine + ATP + H2O = 2-formamido-N(1)-(5-O-phospho-beta-D-ribosyl)acetamidine + L-glutamate + ADP + phosphate + H(+). It catalyses the reaction L-glutamine + H2O = L-glutamate + NH4(+). It participates in purine metabolism; IMP biosynthesis via de novo pathway; 5-amino-1-(5-phospho-D-ribosyl)imidazole from N(2)-formyl-N(1)-(5-phospho-D-ribosyl)glycinamide: step 1/2. In terms of biological role, part of the phosphoribosylformylglycinamidine synthase complex involved in the purines biosynthetic pathway. Catalyzes the ATP-dependent conversion of formylglycinamide ribonucleotide (FGAR) and glutamine to yield formylglycinamidine ribonucleotide (FGAM) and glutamate. The FGAM synthase complex is composed of three subunits. PurQ produces an ammonia molecule by converting glutamine to glutamate. PurL transfers the ammonia molecule to FGAR to form FGAM in an ATP-dependent manner. PurS interacts with PurQ and PurL and is thought to assist in the transfer of the ammonia molecule from PurQ to PurL. The chain is Phosphoribosylformylglycinamidine synthase subunit PurQ from Methanocaldococcus jannaschii (strain ATCC 43067 / DSM 2661 / JAL-1 / JCM 10045 / NBRC 100440) (Methanococcus jannaschii).